We begin with the raw amino-acid sequence, 334 residues long: Syntaxin-18 (334 aa).

At 1 to 308 (MAVDITLLFR…EDIREAIKNN (308 aa)) the chain is on the cytoplasmic side. Disordered stretches follow at residues 29 to 50 (GGAD…GDFS) and 166 to 225 (LSKL…GEDE). Composition is skewed to basic and acidic residues over residues 33-50 (GSRD…GDFS) and 166-182 (LSKL…DSTS). The segment covering 183–192 (EKAPQNASQD) has biased composition (polar residues). Residues 193-207 (SEGKPAAEELPEKPL) show a composition bias toward basic and acidic residues. The region spanning 242–304 (IGEMNSLFDE…KEGNEDIREA (63 aa)) is the t-SNARE coiled-coil homology domain. Residues 309–329 (AGFRVWILFFLVMCSFSLLFL) form a helical; Anchor for type IV membrane protein membrane-spanning segment. Over 330 to 334 (DWYDS) the chain is Lumenal.

The protein belongs to the syntaxin family. In terms of assembly, component of a SNARE complex consisting of STX18, USE1L, BNIP1/SEC20L, and SEC22B. RINT1/TIP20L and ZW10 are associated with the complex through interaction with BNIP1/SEC20L. Interacts directly with USE1L and BNIP1/SEC20L.

Its subcellular location is the endoplasmic reticulum membrane. The protein localises to the golgi apparatus membrane. Its function is as follows. Syntaxin that may be involved in targeting and fusion of Golgi-derived retrograde transport vesicles with the ER. This chain is Syntaxin-18 (Stx18), found in Mus musculus (Mouse).